We begin with the raw amino-acid sequence, 1472 residues long: Vacuolar cation-transporting ATPase YPK9 (1472 aa).

N-acetylmethionine is present on M1. Polar residues-rich tracts occupy residues 1–12 and 72–87; these read MDIPSSNQIQHG and SFQS…SGNL. 3 disordered regions span residues 1–32, 71–115, and 179–273; these read MDIP…TATT, HSFQ…SRNP, and AKSY…DDVH. Topologically, residues 1-293 are cytoplasmic; that stretch reads MDIPSSNQIQ…YHEKFYPQYA (293 aa). A Phosphothreonine modification is found at T95. Composition is skewed to low complexity over residues 103-115 and 211-222; these read SSAE…SRNP and SATHSSSSLSRY. S108 carries the phosphoserine modification. The span at 234–243 shows a compositional bias: acidic residues; the sequence is SQTDEILEDE. Residues 294 to 315 form a helical membrane-spanning segment; that stretch reads PNLHYQRFYIAEEDLVIGIAAY. Residues 316–321 lie on the Vacuolar side of the membrane; that stretch reads QTSKFW. A helical membrane pass occupies residues 322 to 344; the sequence is YIIYNLCCFLTFGLVYLLTRWLP. Residues 345-488 lie on the Cytoplasmic side of the membrane; the sequence is HLKVKLYGVK…INLRMKTTSE (144 aa). The chain crosses the membrane as a helical span at residues 489–511; that stretch reads ILFNEVLHPFYVFQVFSIILWGI. Residues 512–514 lie on the Vacuolar side of the membrane; the sequence is DEY. A helical membrane pass occupies residues 515-533; it reads YYYAACIFLISVLSIFDSL. Residues 534–693 are Cytoplasmic-facing; sequence NEQKKVSRNL…PTGFKFYRDS (160 aa). The chain crosses the membrane as a helical span at residues 694 to 713; the sequence is FKYIGFMSLIAIFGFCVSCV. The Vacuolar segment spans residues 714 to 726; it reads QFIKLGLDKKTMI. The helical transmembrane segment at 727-748 threads the bilayer; sequence LRALDIITIVVPPALPATLTIG. Residues 749-1244 are Cytoplasmic-facing; the sequence is TNFALSRLKE…ALVTSFACFQ (496 aa). D781 serves as the catalytic 4-aspartylphosphate intermediate. Phosphoserine occurs at positions 1117 and 1120. Mg(2+)-binding residues include D1187 and D1191. The helical transmembrane segment at 1245 to 1264 threads the bilayer; that stretch reads YMSLYSAIQFITITILYSRG. Residues 1265–1271 lie on the Vacuolar side of the membrane; it reads SNLGDFQ. A helical membrane pass occupies residues 1272–1289; the sequence is FLYIDLLLIVPIAICMSW. Residues 1290–1307 lie on the Cytoplasmic side of the membrane; sequence SKSYEKIDKKRPSANLVS. A helical membrane pass occupies residues 1308–1331; that stretch reads PKILVPLLISVFLVFLFQFIPWII. Topologically, residues 1332 to 1351 are vacuolar; that stretch reads VQKMSWYIKPIVGGDDAVQS. The helical transmembrane segment at 1352-1374 threads the bilayer; that stretch reads SDNTVLFFVSNFQYILTAIVLSV. Over 1375 to 1387 the chain is Cytoplasmic; it reads GPPYREPMSKNFE. The helical transmembrane segment at 1388 to 1407 threads the bilayer; the sequence is FIVDITVSIGASLLLMTLDT. At 1408-1423 the chain is on the vacuolar side; that stretch reads ESYLGKMLQLTPISNS. Residues 1424 to 1446 form a helical membrane-spanning segment; the sequence is FTMFIIVWVILNYYAQLYIPPSI. Over 1447-1472 the chain is Cytoplasmic; sequence KGWLKKKKSSKKYKLLIQEEMKLKEV.

Belongs to the cation transport ATPase (P-type) (TC 3.A.3) family. Type V subfamily.

Its subcellular location is the vacuole membrane. It carries out the reaction ATP + H2O = ADP + phosphate + H(+). Vacuolar transporter which plays a role in sequestration of divalent heavy metal ions. This Saccharomyces cerevisiae (strain ATCC 204508 / S288c) (Baker's yeast) protein is Vacuolar cation-transporting ATPase YPK9 (YPK9).